Consider the following 292-residue polypeptide: Probable 2-(5''-triphosphoribosyl)-3'-dephosphocoenzyme-A synthase (292 aa).

It belongs to the CitG/MdcB family.

It catalyses the reaction 3'-dephospho-CoA + ATP = 2'-(5''-triphospho-alpha-D-ribosyl)-3'-dephospho-CoA + adenine. This Shigella boydii serotype 18 (strain CDC 3083-94 / BS512) protein is Probable 2-(5''-triphosphoribosyl)-3'-dephosphocoenzyme-A synthase.